The following is a 1129-amino-acid chain: ATP-dependent DNA helicase mph1 (1129 aa).

Disordered regions lie at residues 1-101, 124-222, and 236-306; these read MTGS…FEDA, TQLT…QNEG, and DAFD…TQHK. The segment covering 45-63 has biased composition (basic and acidic residues); the sequence is DGTASDVRRRPSENRESQR. 2 stretches are compositionally biased toward polar residues: residues 203–222 and 242–285; these read NTKA…QNEG and ISLS…QTDQ. A compositionally biased stretch (basic and acidic residues) spans 297–306; the sequence is QKDEPPTQHK. A Helicase ATP-binding domain is found at 331-499; the sequence is IAQKGLFHNL…AVIDGLDIAR (169 aa). An ATP-binding site is contributed by 344–351; it reads LPTGLGKT. Residues 447 to 450 carry the DEAH box motif; it reads DEAH. The region spanning 674–843 is the Helicase C-terminal domain; sequence VLNHFMDAGE…GSRFTFHDDI (170 aa). Disordered stretches follow at residues 863–930, 1018–1060, and 1072–1129; these read IPDE…VEIP, RQGD…STED, and SVVK…DSDD. Basic residues-rich tracts occupy residues 877–889 and 1028–1044; these read RRGR…PKKF and SPRH…KPRY. Polar residues predominate over residues 1077–1086; the sequence is QKQQPFYSSQ.

The protein belongs to the DEAD box helicase family. DEAH subfamily. FANCM sub-subfamily. Interacts with the MHF histone-fold complex to form the FANCM-MHF complex.

It is found in the nucleus. The enzyme catalyses ATP + H2O = ADP + phosphate + H(+). Functionally, ATP-dependent DNA helicase involved in DNA damage repair by homologous recombination and in genome maintenance. Capable of unwinding D-loops. Plays a role in limiting crossover recombinants during mitotic DNA double-strand break (DSB) repair. Component of a FANCM-MHF complex which promotes gene conversion at blocked replication forks, probably by reversal of the stalled fork. This is ATP-dependent DNA helicase mph1 from Aspergillus oryzae (strain ATCC 42149 / RIB 40) (Yellow koji mold).